We begin with the raw amino-acid sequence, 731 residues long: Endopolyphosphatase (731 aa).

Over 1–4 (MSLS) the chain is Cytoplasmic. A helical; Signal-anchor for type II membrane protein membrane pass occupies residues 5–25 (RCILGLACLWHGVIASPLGAV). The Vacuolar segment spans residues 26 to 731 (PSNIPIATDL…VEKEDLKKFT (706 aa)). Asn-106 carries N-linked (GlcNAc...) asparagine glycosylation. The disordered stretch occupies residues 375 to 403 (KLQPPPTDSKNSGQLKKGKKGRKGKKKKP). The span at 390 to 402 (KKGKKGRKGKKKK) shows a compositional bias: basic residues. An N-linked (GlcNAc...) asparagine glycan is attached at Asn-433. Residues 456-522 (EQNDRQKHLD…PPGPAYSPQP (67 aa)) form a disordered region. 2 stretches are compositionally biased toward basic and acidic residues: residues 457–474 (QNDRQKHLDLKRQHPSHM) and 492–501 (GGDSKPKKPD). Residues 505-519 (PHPPAKSSPPGPAYS) show a composition bias toward pro residues. N-linked (GlcNAc...) asparagine glycosylation is found at Asn-534 and Asn-540. The disordered stretch occupies residues 626-706 (AKSIDVSYES…HKKKKGKKRQ (81 aa)). A compositionally biased stretch (acidic residues) spans 636-686 (AAEEEEEEEEEEEEDLFEEVEETDEEEEQEDDDLSDGEEVDDDSDEDELET). Over residues 691-706 (KHDKKKHKKKKGKKRQ) the composition is skewed to basic residues.

It belongs to the endopolyphosphatase PPN1 family. Requires a divalent metal cation as cofactor. Processing by proteases in the vacuole may be required for activation.

It localises to the vacuole membrane. The catalysed reaction is [phosphate](n+1) + n H2O = (n+1) phosphate + n H(+). Catalyzes the hydrolysis of inorganic polyphosphate (polyP) chains of many hundreds of phosphate residues into shorter lengths. The sequence is that of Endopolyphosphatase (epp-1) from Neurospora crassa (strain ATCC 24698 / 74-OR23-1A / CBS 708.71 / DSM 1257 / FGSC 987).